Consider the following 325-residue polypeptide: D-alanine--D-alanine ligase (325 aa).

Residues 121–316 (KYVFEGCGLP…FEELVVRILR (196 aa)) enclose the ATP-grasp domain. 147 to 202 (VAALGTPLSVKPAHEGSSIGIRKVNSAAELAEAYEAAARLDDLVLVEQWIEGPEFT) contributes to the ATP binding site. Mg(2+)-binding residues include D270, E283, and N285.

This sequence belongs to the D-alanine--D-alanine ligase family. Requires Mg(2+) as cofactor. Mn(2+) serves as cofactor.

It localises to the cytoplasm. It carries out the reaction 2 D-alanine + ATP = D-alanyl-D-alanine + ADP + phosphate + H(+). The protein operates within cell wall biogenesis; peptidoglycan biosynthesis. Functionally, cell wall formation. This chain is D-alanine--D-alanine ligase, found in Marinobacter nauticus (strain ATCC 700491 / DSM 11845 / VT8) (Marinobacter aquaeolei).